The primary structure comprises 427 residues: 3-phosphoshikimate 1-carboxyvinyltransferase (427 aa).

Positions 23, 24, and 28 each coordinate 3-phosphoshikimate. Residue Lys23 coordinates phosphoenolpyruvate. Phosphoenolpyruvate-binding residues include Gly97 and Arg125. 7 residues coordinate 3-phosphoshikimate: Ser169, Ser170, Gln171, Ser197, Asp313, Asn336, and Lys340. Gln171 lines the phosphoenolpyruvate pocket. Asp313 acts as the Proton acceptor in catalysis. Positions 344, 386, and 411 each coordinate phosphoenolpyruvate.

The protein belongs to the EPSP synthase family. Monomer.

The protein localises to the cytoplasm. The enzyme catalyses 3-phosphoshikimate + phosphoenolpyruvate = 5-O-(1-carboxyvinyl)-3-phosphoshikimate + phosphate. It participates in metabolic intermediate biosynthesis; chorismate biosynthesis; chorismate from D-erythrose 4-phosphate and phosphoenolpyruvate: step 6/7. In terms of biological role, catalyzes the transfer of the enolpyruvyl moiety of phosphoenolpyruvate (PEP) to the 5-hydroxyl of shikimate-3-phosphate (S3P) to produce enolpyruvyl shikimate-3-phosphate and inorganic phosphate. This chain is 3-phosphoshikimate 1-carboxyvinyltransferase, found in Yersinia ruckeri.